The chain runs to 359 residues: Chorismate synthase (359 aa).

NADP(+) is bound at residue R47. Residues 123–125 (RSS), G283, 298–302 (KPTSS), and R326 contribute to the FMN site.

The protein belongs to the chorismate synthase family. Homotetramer. The cofactor is FMNH2.

The enzyme catalyses 5-O-(1-carboxyvinyl)-3-phosphoshikimate = chorismate + phosphate. It functions in the pathway metabolic intermediate biosynthesis; chorismate biosynthesis; chorismate from D-erythrose 4-phosphate and phosphoenolpyruvate: step 7/7. In terms of biological role, catalyzes the anti-1,4-elimination of the C-3 phosphate and the C-6 proR hydrogen from 5-enolpyruvylshikimate-3-phosphate (EPSP) to yield chorismate, which is the branch point compound that serves as the starting substrate for the three terminal pathways of aromatic amino acid biosynthesis. This reaction introduces a second double bond into the aromatic ring system. This chain is Chorismate synthase, found in Chlamydia abortus (strain DSM 27085 / S26/3) (Chlamydophila abortus).